Here is a 270-residue protein sequence, read N- to C-terminus: Urease accessory protein UreD (270 aa).

Belongs to the UreD family. UreD, UreF and UreG form a complex that acts as a GTP-hydrolysis-dependent molecular chaperone, activating the urease apoprotein by helping to assemble the nickel containing metallocenter of UreC. The UreE protein probably delivers the nickel.

The protein resides in the cytoplasm. Its function is as follows. Required for maturation of urease via the functional incorporation of the urease nickel metallocenter. The chain is Urease accessory protein UreD from Actinobacillus pleuropneumoniae serotype 7 (strain AP76).